Here is a 182-residue protein sequence, read N- to C-terminus: MSKKVIEDTSKFLSYVLRHEPQAIGLELDSEGWGDIDALISGAAKNGRQLSRELIELVVEGNDKKRFALSADSRRIRAVQGHSNKAVQLQLEAKQPPAVLFHGTATRFMDSINEKGLIPGSRHHVHLSQEIDTARAVGQRYGKVVILQIDAQAMQAQGFTFYQAENGVWLTDQVPVGFIKAL.

This sequence belongs to the KptA/TPT1 family.

Removes the 2'-phosphate from RNA via an intermediate in which the phosphate is ADP-ribosylated by NAD followed by a presumed transesterification to release the RNA and generate ADP-ribose 1''-2''-cyclic phosphate (APPR&gt;P). May function as an ADP-ribosylase. In Pseudomonas fluorescens (strain ATCC BAA-477 / NRRL B-23932 / Pf-5), this protein is Probable RNA 2'-phosphotransferase.